The sequence spans 176 residues: 3-hydroxydecanoyl-[acyl-carrier-protein] dehydratase (176 aa).

Residue H71 is part of the active site.

Belongs to the thioester dehydratase family. FabA subfamily. As to quaternary structure, homodimer.

Its subcellular location is the cytoplasm. The enzyme catalyses a (3R)-hydroxyacyl-[ACP] = a (2E)-enoyl-[ACP] + H2O. It carries out the reaction (3R)-hydroxydecanoyl-[ACP] = (2E)-decenoyl-[ACP] + H2O. It catalyses the reaction (2E)-decenoyl-[ACP] = (3Z)-decenoyl-[ACP]. The protein operates within lipid metabolism; fatty acid biosynthesis. Functionally, necessary for the introduction of cis unsaturation into fatty acids. Catalyzes the dehydration of (3R)-3-hydroxydecanoyl-ACP to E-(2)-decenoyl-ACP and then its isomerization to Z-(3)-decenoyl-ACP. Can catalyze the dehydratase reaction for beta-hydroxyacyl-ACPs with saturated chain lengths up to 16:0, being most active on intermediate chain length. This Afipia carboxidovorans (strain ATCC 49405 / DSM 1227 / KCTC 32145 / OM5) (Oligotropha carboxidovorans) protein is 3-hydroxydecanoyl-[acyl-carrier-protein] dehydratase.